Here is a 299-residue protein sequence, read N- to C-terminus: Ciliary microtubule inner protein 2B (299 aa).

Belongs to the CIMIP2 family. As to expression, expressed in airway epithelial cells.

Its subcellular location is the cytoplasm. It localises to the cytoskeleton. The protein resides in the cilium axoneme. Functionally, microtubule inner protein (MIP) part of the dynein-decorated doublet microtubules (DMTs) in cilia axoneme, which is required for motile cilia beating. The polypeptide is Ciliary microtubule inner protein 2B (cimip2b) (Danio rerio (Zebrafish)).